The sequence spans 389 residues: Chorismate synthase (389 aa).

NADP(+) is bound by residues R40 and R46. Residues 131-133 (RSS), 252-253 (NA), G297, 312-316 (KPIPT), and R338 each bind FMN.

The protein belongs to the chorismate synthase family. Homotetramer. Requires FMNH2 as cofactor.

It carries out the reaction 5-O-(1-carboxyvinyl)-3-phosphoshikimate = chorismate + phosphate. It functions in the pathway metabolic intermediate biosynthesis; chorismate biosynthesis; chorismate from D-erythrose 4-phosphate and phosphoenolpyruvate: step 7/7. Catalyzes the anti-1,4-elimination of the C-3 phosphate and the C-6 proR hydrogen from 5-enolpyruvylshikimate-3-phosphate (EPSP) to yield chorismate, which is the branch point compound that serves as the starting substrate for the three terminal pathways of aromatic amino acid biosynthesis. This reaction introduces a second double bond into the aromatic ring system. In Lactiplantibacillus plantarum (strain ATCC BAA-793 / NCIMB 8826 / WCFS1) (Lactobacillus plantarum), this protein is Chorismate synthase.